The primary structure comprises 173 residues: Small ribosomal subunit protein uS5 (173 aa).

Positions 17-80 (WQERVIQIRR…ADGKKQLIDV (64 aa)) constitute an S5 DRBM domain.

It belongs to the universal ribosomal protein uS5 family. As to quaternary structure, part of the 30S ribosomal subunit. Contacts proteins S4 and S8.

Its function is as follows. With S4 and S12 plays an important role in translational accuracy. Functionally, located at the back of the 30S subunit body where it stabilizes the conformation of the head with respect to the body. This chain is Small ribosomal subunit protein uS5, found in Crocosphaera subtropica (strain ATCC 51142 / BH68) (Cyanothece sp. (strain ATCC 51142)).